A 90-amino-acid chain; its full sequence is Small regulatory polypeptide of amino acid response (90 aa).

At 1-18 (MGAKAPRGPKVAQWAMET) the chain is on the lumenal side. Residues 19–39 (AVIGVVVVLFVVTVAITCVLC) traverse the membrane as a helical segment. The Cytoplasmic segment spans residues 40–90 (CFSCDSRAQDPQGGPGRSFTVATFRQEASLFTGPVRHAQPVPSAQDFWTFM).

Interacts with components of the lysosomal V-ATPase complex. Interacts with ATP6V0A1. Interacts with ATP6V0A2. Highly expressed in lung, heart and skeletal muscle.

The protein localises to the late endosome membrane. It is found in the lysosome membrane. Its function is as follows. Negative regulator of amino acid sensing and mTORC1, a signaling complex promoting cell growth in response to growth factors, energy levels and amino acids. Negatively regulates mTORC1 activation by inhibiting recruitment of mTORC1 to lysosomes upon stimulation with amino acids: acts by promoting the formation of a tightly bound supercomplex composed of the lysosomal V-ATPase, Ragulator and Rag GTPases, preventing recruitment of mTORC1. Acts as a regulator of muscle regeneration following injury by regulating mTORC1 activation. The protein is Small regulatory polypeptide of amino acid response of Homo sapiens (Human).